The chain runs to 283 residues: UPF0276 protein Nmul_A2550 (283 aa).

The protein belongs to the UPF0276 family.

In Nitrosospira multiformis (strain ATCC 25196 / NCIMB 11849 / C 71), this protein is UPF0276 protein Nmul_A2550.